The chain runs to 70 residues: Large ribosomal subunit protein eL38 (70 aa).

Lys-4 is covalently cross-linked (Glycyl lysine isopeptide (Lys-Gly) (interchain with G-Cter in SUMO2)). Position 9 is an N6-acetyllysine; alternate (Lys-9). Lys-9 is covalently cross-linked (Glycyl lysine isopeptide (Lys-Gly) (interchain with G-Cter in SUMO2); alternate). Lys-67 carries the post-translational modification N6-acetyllysine.

It belongs to the eukaryotic ribosomal protein eL38 family. Component of the large ribosomal subunit.

It is found in the cytoplasm. Component of the large ribosomal subunit. The ribosome is a large ribonucleoprotein complex responsible for the synthesis of proteins in the cell. The sequence is that of Large ribosomal subunit protein eL38 (Rpl38) from Mus musculus (Mouse).